Reading from the N-terminus, the 168-residue chain is Vitelline membrane protein Vm26Ab (168 aa).

A signal peptide spans 1–23 (MAFNFGHLLIAGLVALSAVSSET). Positions 24–42 (IQLQPTQGILIPAPLAENI) are cleaved as a propeptide — removed between stage 11 and 14 of oogenesis. Residues 43-46 (RVSR) form an essential for N-terminal propeptide removal. Potential serine protease cleavage site region. The segment at 52 to 119 (YGAAPAAPSY…PAYSAPASIP (68 aa)) is 8 X 8 AA approximate repeats of P-[AS]-Y-S-A-P-A-[AS]. The stretch at 55–58 (APAA) is one 1; half-length repeat. Copy 2 of the repeat occupies 59–66 (PSYSAPAA). The stretch at 70–77 (QAYSAPAA) is one 3; approximate repeat. A run of 5 repeats spans residues 78-85 (PAYSAPAA), 86-93 (PAYSAPAA), 94-101 (PAYSAPAA), 102-109 (PAYSAPAA), and 110-117 (PAYSAPAS). Residues 117-154 (SIPSPPCPKNYLFSCQPSLQPVPCSAPAQSYGSAGAYS) form the VM domain. The propeptide at 155 to 168 (QYVPQYAVPFVREL) is removed between stage 9 and 12 of oogenesis.

Belongs to the vitelline membrane protein family. Interacts with vml and Vm26Aa; forms part of a disulfide-linked network within the vitelline membrane of stage 10 egg chambers. Proteolytically processed after secretion into the perivitelline space. Undergoes several proteolytic processing steps during formation of the vitelline membrane; an initial processing step removing a C-terminal propeptide occurs between stage 9 and 12 of oogenesis while a second removing a N-terminal propeptide occurs between stage 11 and 14. Post-translationally, becomes part of a disulfide-linked network including other vitelline membrane proteins, including vml and Vm26Aa, during vitelline membrane biogenesis and maturation. Cys-123, Cys-131 and Cys-140 are involved in disulfide network formation, with Cys-131 being the most important. Undergoes both disulfide and non-disulfide cross-linking upon incorporation into the vitelline membrane. As to expression, follicle cells.

It is found in the secreted. It localises to the extracellular space. The protein resides in the extracellular matrix. Functionally, major early eggshell protein secreted by follicle cells into the perivitelline space and incorporated into the vitelline membrane. Involved in vitelline membrane biogenesis; forms a cross-linked network with other vitelline membrane components. This Drosophila melanogaster (Fruit fly) protein is Vitelline membrane protein Vm26Ab.